A 291-amino-acid polypeptide reads, in one-letter code: Phycobilisome 32.1 kDa linker polypeptide, phycocyanin-associated, rod 1 (291 aa).

One can recognise a PBS-linker domain in the interval 2–179 (AITTAASRLG…LYRGYANSDR (178 aa)). The region spanning 236-288 (SKLFRVEITAISAPGYPKVRRSNKAVIVPFEQLNQTLQQINRLGGKVASITPA) is the CpcD-like domain.

The protein belongs to the phycobilisome linker protein family. In terms of assembly, part of 2 PBS rod complexes, the conventional CpcG-PBS rod and a photosystem I-specific CpcL-PBS rod, both of which include ferredoxin--NADP reductase (petH). CpcG-PBS has on average 3 stacked phycocyanin hexamers (PC, CpcA and CpcB). Linker CpcG connects the PC stack to the thylakoid, the hexamers are linked by 1 copy of CpcC1, 1 copy of CpcC2 and the stack is terminated by a single copy of CpcD. The CpcL-PBS has on average 5 stacked phycocyanin hexamers (PC, CpcA and CpcB). Linker CpcL connects the PC stack to the thylakoid, the hexamers are linked by 1 copy of CpcC1, 3 copies of CpcC2 and the stack is terminated by a single copy of CpcD.

It localises to the cellular thylakoid membrane. Functionally, rod linker protein, connecting hexameric phycocyanin (PC, made by cpcA and cpcB) rods in the phycobilisome (PBS). PC is the major phycobiliprotein in PBS rods. Linker polypeptides determine the state of aggregation and the location of the disk-shaped phycobiliprotein units within the phycobilisome and modulate their spectroscopic properties in order to mediate a directed and optimal energy transfer. This Synechocystis sp. (strain ATCC 27184 / PCC 6803 / Kazusa) protein is Phycobilisome 32.1 kDa linker polypeptide, phycocyanin-associated, rod 1 (cpcC1).